The primary structure comprises 226 residues: ATP-dependent dethiobiotin synthetase BioD (226 aa).

12-17 lines the ATP pocket; it reads GVGKTV. Residue T16 coordinates Mg(2+). K37 is an active-site residue. T41 contacts substrate. Residues D49, 108–111, and 169–170 each bind ATP; these read EGAG and GS. 2 residues coordinate Mg(2+): D49 and E108.

This sequence belongs to the dethiobiotin synthetase family. In terms of assembly, homodimer. Requires Mg(2+) as cofactor.

It localises to the cytoplasm. The catalysed reaction is (7R,8S)-7,8-diammoniononanoate + CO2 + ATP = (4R,5S)-dethiobiotin + ADP + phosphate + 3 H(+). The protein operates within cofactor biosynthesis; biotin biosynthesis; biotin from 7,8-diaminononanoate: step 1/2. Functionally, catalyzes a mechanistically unusual reaction, the ATP-dependent insertion of CO2 between the N7 and N8 nitrogen atoms of 7,8-diaminopelargonic acid (DAPA, also called 7,8-diammoniononanoate) to form a ureido ring. The polypeptide is ATP-dependent dethiobiotin synthetase BioD (Mycobacterium marinum (strain ATCC BAA-535 / M)).